Reading from the N-terminus, the 362-residue chain is Peptide chain release factor 1 (362 aa).

At Gln-237 the chain carries N5-methylglutamine.

The protein belongs to the prokaryotic/mitochondrial release factor family. Post-translationally, methylated by PrmC. Methylation increases the termination efficiency of RF1.

It localises to the cytoplasm. In terms of biological role, peptide chain release factor 1 directs the termination of translation in response to the peptide chain termination codons UAG and UAA. The sequence is that of Peptide chain release factor 1 from Aliivibrio fischeri (strain ATCC 700601 / ES114) (Vibrio fischeri).